Here is a 295-residue protein sequence, read N- to C-terminus: Ethanolamine ammonia-lyase small subunit (295 aa).

Residues Val208 and Glu229 each contribute to the adenosylcob(III)alamin site.

Belongs to the EutC family. The basic unit is a heterodimer which dimerizes to form tetramers. The heterotetramers trimerize; 6 large subunits form a core ring with 6 small subunits projecting outwards. Adenosylcob(III)alamin is required as a cofactor.

The protein localises to the bacterial microcompartment. It catalyses the reaction ethanolamine = acetaldehyde + NH4(+). The protein operates within amine and polyamine degradation; ethanolamine degradation. Functionally, catalyzes the deamination of various vicinal amino-alcohols to oxo compounds. Allows this organism to utilize ethanolamine as the sole source of nitrogen and carbon in the presence of external vitamin B12. In Fusobacterium nucleatum subsp. nucleatum (strain ATCC 25586 / DSM 15643 / BCRC 10681 / CIP 101130 / JCM 8532 / KCTC 2640 / LMG 13131 / VPI 4355), this protein is Ethanolamine ammonia-lyase small subunit.